Here is a 376-residue protein sequence, read N- to C-terminus: Succinyl-diaminopimelate desuccinylase (376 aa).

His67 provides a ligand contact to Zn(2+). Asp69 is a catalytic residue. Asp100 is a Zn(2+) binding site. The active-site Proton acceptor is Glu134. Zn(2+)-binding residues include Glu135, Glu163, and His349.

It belongs to the peptidase M20A family. DapE subfamily. In terms of assembly, homodimer. Zn(2+) is required as a cofactor. Co(2+) serves as cofactor.

It catalyses the reaction N-succinyl-(2S,6S)-2,6-diaminopimelate + H2O = (2S,6S)-2,6-diaminopimelate + succinate. It participates in amino-acid biosynthesis; L-lysine biosynthesis via DAP pathway; LL-2,6-diaminopimelate from (S)-tetrahydrodipicolinate (succinylase route): step 3/3. Catalyzes the hydrolysis of N-succinyl-L,L-diaminopimelic acid (SDAP), forming succinate and LL-2,6-diaminopimelate (DAP), an intermediate involved in the bacterial biosynthesis of lysine and meso-diaminopimelic acid, an essential component of bacterial cell walls. In Pseudoalteromonas translucida (strain TAC 125), this protein is Succinyl-diaminopimelate desuccinylase.